The following is a 154-amino-acid chain: MTVFEGNLTTGNAKYGIVVARFNEFINAKLLAGALDALKRHGVQEEQIDIAWVPGAFEIPLIAQKMASSDKYDAIICLGTVIRGSTSHYDFVCSEVSKGIAHVSLNSNIPVMFGVLTTENIEQAIERSGTKAGNKGFEVAVGAIEMVDLMAKMS.

Residues Phe-22, 56-58 (AFE), and 80-82 (TVI) contribute to the 5-amino-6-(D-ribitylamino)uracil site. Residue 85–86 (ST) participates in (2S)-2-hydroxy-3-oxobutyl phosphate binding. His-88 functions as the Proton donor in the catalytic mechanism. Residue Phe-113 participates in 5-amino-6-(D-ribitylamino)uracil binding. Arg-127 is a (2S)-2-hydroxy-3-oxobutyl phosphate binding site.

Belongs to the DMRL synthase family.

The catalysed reaction is (2S)-2-hydroxy-3-oxobutyl phosphate + 5-amino-6-(D-ribitylamino)uracil = 6,7-dimethyl-8-(1-D-ribityl)lumazine + phosphate + 2 H2O + H(+). Its pathway is cofactor biosynthesis; riboflavin biosynthesis; riboflavin from 2-hydroxy-3-oxobutyl phosphate and 5-amino-6-(D-ribitylamino)uracil: step 1/2. Its function is as follows. Catalyzes the formation of 6,7-dimethyl-8-ribityllumazine by condensation of 5-amino-6-(D-ribitylamino)uracil with 3,4-dihydroxy-2-butanone 4-phosphate. This is the penultimate step in the biosynthesis of riboflavin. The sequence is that of 6,7-dimethyl-8-ribityllumazine synthase from Lactococcus lactis subsp. cremoris (strain MG1363).